Here is a 378-residue protein sequence, read N- to C-terminus: Probable pectin lyase A (378 aa).

The N-terminal stretch at 1-18 (MKYASFLALVGFITSTSA) is a signal peptide. 2 disulfides stabilise this stretch: C81–C100 and C90–C224. R254 is an active-site residue. Cysteines 321 and 329 form a disulfide.

Belongs to the polysaccharide lyase 1 family.

It localises to the secreted. It catalyses the reaction Eliminative cleavage of (1-&gt;4)-alpha-D-galacturonan methyl ester to give oligosaccharides with 4-deoxy-6-O-methyl-alpha-D-galact-4-enuronosyl groups at their non-reducing ends.. In terms of biological role, pectinolytic enzymes consist of four classes of enzymes: pectin lyase, polygalacturonase, pectin methylesterase and rhamnogalacturonase. Among pectinolytic enzymes, pectin lyase is the most important in depolymerization of pectin, since it cleaves internal glycosidic bonds of highly methylated pectins. In Aspergillus clavatus (strain ATCC 1007 / CBS 513.65 / DSM 816 / NCTC 3887 / NRRL 1 / QM 1276 / 107), this protein is Probable pectin lyase A (pelA).